We begin with the raw amino-acid sequence, 225 residues long: Esterase OVCA2 (225 aa).

Residues S119, D177, and H204 each act as charge relay system in the active site.

Belongs to the LovG family. As to expression, strongly expressed in kidney and liver. Moderately expressed in brain, skin and testis. Weakly expressed in heart, lung, small intestine, spleen, stomach and thymus.

It carries out the reaction a carboxylic ester + H2O = an alcohol + a carboxylate + H(+). Exhibits ester hydrolase activity with a strong preference for long-chain alkyl ester substrates and high selectivity against a variety of short, branched, and substituted esters. Is able to hydrolyze ester bonds within a wide range of p-nitrophenyl derivatives (C2-C14) in vitro, with a strong preference toward substrates of &gt;8 carbons. The polypeptide is Esterase OVCA2 (Ovca2) (Mus musculus (Mouse)).